Here is a 395-residue protein sequence, read N- to C-terminus: Thyroid hormone receptor beta (395 aa).

Positions 1 to 31 are modulating; sequence MSEPAENCSPRWKDEAIQNGYIPSYLDKDEL. C32, C35, C49, C52, C70, C76, C86, and C89 together coordinate Zn(2+). 2 consecutive NR C4-type zinc fingers follow at residues 32-52 and 70-94; these read CVVC…CEGC and CKYE…FKKC. Positions 32–99 form a DNA-binding region, nuclear receptor; that stretch reads CVVCGDKATG…RFKKCIAVGM (68 aa). The NR LBD domain occupies 142-395; that stretch reads EEWDLIRMVT…PPLFLEVFED (254 aa). 3,3',5-triiodo-L-thyronine is bound by residues R216, N265, and H369. R216, N265, and H369 together coordinate L-thyroxine.

This sequence belongs to the nuclear hormone receptor family. NR1 subfamily.

It is found in the nucleus. Functionally, nuclear hormone receptor that can act as a repressor or activator of transcription. High affinity receptor for thyroid hormones, including triiodothyronine and thyroxine. In Paralichthys olivaceus (Bastard halibut), this protein is Thyroid hormone receptor beta (thrb).